The primary structure comprises 469 residues: Tryptophan biosynthesis protein TrpCF (469 aa).

The segment at 1 to 271 (MSEQLSEHIS…LAVRKIVLGE (271 aa)) is indole-3-glycerol phosphate synthase. The segment at 272 to 469 (HKVCGLTHPD…QQVFQQLRNY (198 aa)) is N-(5'-phosphoribosyl)anthranilate isomerase.

In the N-terminal section; belongs to the TrpC family. It in the C-terminal section; belongs to the TrpF family. In terms of assembly, monomer.

It carries out the reaction N-(5-phospho-beta-D-ribosyl)anthranilate = 1-(2-carboxyphenylamino)-1-deoxy-D-ribulose 5-phosphate. The catalysed reaction is 1-(2-carboxyphenylamino)-1-deoxy-D-ribulose 5-phosphate + H(+) = (1S,2R)-1-C-(indol-3-yl)glycerol 3-phosphate + CO2 + H2O. Its pathway is amino-acid biosynthesis; L-tryptophan biosynthesis; L-tryptophan from chorismate: step 3/5. It functions in the pathway amino-acid biosynthesis; L-tryptophan biosynthesis; L-tryptophan from chorismate: step 4/5. Its function is as follows. Bifunctional enzyme that catalyzes two sequential steps of tryptophan biosynthetic pathway. The first reaction is catalyzed by the isomerase, coded by the TrpF domain; the second reaction is catalyzed by the synthase, coded by the TrpC domain. The polypeptide is Tryptophan biosynthesis protein TrpCF (trpCF) (Vibrio cholerae serotype O1 (strain ATCC 39315 / El Tor Inaba N16961)).